Here is a 400-residue protein sequence, read N- to C-terminus: Ubiquitin-like modifier-activating enzyme 5 (400 aa).

Positions 76, 97, 120, 143, and 177 each coordinate ATP. 2 residues coordinate Zn(2+): Cys-219 and Cys-222. The active-site Glycyl thioester intermediate is the Cys-243. 2 residues coordinate Zn(2+): Cys-296 and Cys-301.

This sequence belongs to the ubiquitin-activating E1 family. UBA5 subfamily.

Its function is as follows. E1-like enzyme which activates UFM1. The polypeptide is Ubiquitin-like modifier-activating enzyme 5 (Drosophila virilis (Fruit fly)).